The chain runs to 458 residues: V-type sodium ATPase subunit B (458 aa).

This sequence belongs to the ATPase alpha/beta chains family.

In terms of biological role, involved in ATP-driven sodium extrusion. This is V-type sodium ATPase subunit B (ntpB) from Enterococcus hirae (strain ATCC 9790 / DSM 20160 / JCM 8729 / LMG 6399 / NBRC 3181 / NCIMB 6459 / NCDO 1258 / NCTC 12367 / WDCM 00089 / R).